We begin with the raw amino-acid sequence, 178 residues long: Large ribosomal subunit protein uL6 (178 aa).

It belongs to the universal ribosomal protein uL6 family. As to quaternary structure, part of the 50S ribosomal subunit.

Its function is as follows. This protein binds to the 23S rRNA, and is important in its secondary structure. It is located near the subunit interface in the base of the L7/L12 stalk, and near the tRNA binding site of the peptidyltransferase center. The chain is Large ribosomal subunit protein uL6 from Streptococcus uberis (strain ATCC BAA-854 / 0140J).